Consider the following 827-residue polypeptide: Villin-1 (827 aa).

Residues 1–126 are necessary for homodimerization; sequence MTKLSAQVKG…IRKGGVASGM (126 aa). The interval 1-734 is core; that stretch reads MTKLSAQVKG…YEDLKAELGN (734 aa). Residues 27-76 form a Gelsolin-like 1 repeat; the sequence is MQMVPVPSNSFGSFFDGDCYVIQAIHKTGSNLSYDIHYWIGQASSQDEQG. LPA/PIP2-binding site stretches follow at residues 112 to 119 and 138 to 146; these read KKGIVIRK and RLLHVKGKR. Gelsolin-like repeat units lie at residues 148-188 and 265-309; these read VVAG…MERL and VVVR…QEKK. Ser366 bears the Phosphoserine mark. Gelsolin-like repeat units lie at residues 407-457, 528-568, and 631-672; these read NLEL…DEIT, TKAF…DERE, and FLAT…DEKK. Residue Ser735 is modified to Phosphoserine. Positions 735 to 827 are headpiece; that stretch reads SGDWSQITAE…QNLKKEKGLF (93 aa). Residues 761–827 enclose the HP domain; sequence SGPLPIFPLE…QNLKKEKGLF (67 aa). The interval 816–824 is LPA/PIP2-binding site 3; that stretch reads KQQNLKKEK.

The protein belongs to the villin/gelsolin family. In terms of assembly, monomer. Homodimer; homodimerization is necessary for actin-bundling. Associates with F-actin; phosphorylation at tyrosine residues decreases the association with F-actin. Interacts (phosphorylated at C-terminus tyrosine phosphorylation sites) with PLCG1 (via the SH2 domains). Interacts (phosphorylated form) with PLCG1; the interaction is enhanced by hepatocyte growth factor (HGF). Post-translationally, phosphorylated on tyrosine residues by SRC. The unphosphorylated form increases the initial rate of actin-nucleating activity, whereas the tyrosine-phosphorylated form inhibits actin-nucleating activity, enhances actin-bundling activity and enhances actin-severing activity by reducing high Ca(2+) requirements. The tyrosine-phosphorylated form does not regulate actin-capping activity. Tyrosine phosphorylation is essential for cell migration: tyrosine phosphorylation sites in the N-terminus half regulate actin reorganization and cell morphology, whereas tyrosine phosphorylation sites in the C-terminus half regulate cell migration via interaction with PLCG1. Tyrosine phosphorylation is induced by epidermal growth factor (EGF) and stimulates cell migration.

It is found in the cytoplasm. It localises to the cytoskeleton. Its subcellular location is the cell projection. The protein localises to the lamellipodium. The protein resides in the ruffle. It is found in the microvillus. It localises to the filopodium tip. Its subcellular location is the filopodium. Functionally, epithelial cell-specific Ca(2+)-regulated actin-modifying protein that modulates the reorganization of microvillar actin filaments. Plays a role in the actin nucleation, actin filament bundle assembly, actin filament capping and severing. Binds phosphatidylinositol 4,5-bisphosphate (PIP2) and lysophosphatidic acid (LPA); binds LPA with higher affinity than PIP2. Binding to LPA increases its phosphorylation by SRC and inhibits all actin-modifying activities. Binding to PIP2 inhibits actin-capping and -severing activities but enhances actin-bundling activity. Regulates the intestinal epithelial cell morphology, cell invasion, cell migration and apoptosis. Protects against apoptosis induced by dextran sodium sulfate (DSS) in the gastrointestinal epithelium. Appears to regulate cell death by maintaining mitochondrial integrity. Enhances hepatocyte growth factor (HGF)-induced epithelial cell motility, chemotaxis and wound repair. The chain is Villin-1 (VIL1) from Bos taurus (Bovine).